Reading from the N-terminus, the 151-residue chain is Sperm surface protein Sp17 (151 aa).

A compositionally biased stretch (basic and acidic residues) spans 68–98 (FYNNHAFEEQEPPEKSDPKQEESQIPGKEEE). Disordered stretches follow at residues 68–115 (FYNN…EKEE) and 130–151 (AREE…EENK). The IQ domain maps to 114 to 143 (EEVAAVKIQAAFRGHVAREEVKKMKTDSLQ).

In terms of assembly, homodimer. May interact with ROPN1. As to expression, testis- and sperm-specific.

The protein localises to the membrane. Sperm surface zona pellucida binding protein. Helps to bind spermatozoa to the zona pellucida with high affinity. Might function in binding zona pellucida and carbohydrates. The protein is Sperm surface protein Sp17 (SPA17) of Macaca fascicularis (Crab-eating macaque).